The sequence spans 20 residues: Unknown protein NF003 from 2D-PAGE (20 aa).

This Naegleria fowleri (Brain eating amoeba) protein is Unknown protein NF003 from 2D-PAGE.